Here is a 499-residue protein sequence, read N- to C-terminus: Probable cytosol aminopeptidase (499 aa).

Mn(2+) is bound by residues lysine 269 and aspartate 274. Lysine 281 is an active-site residue. Mn(2+) is bound by residues aspartate 292, aspartate 351, and glutamate 353. Residue arginine 355 is part of the active site.

Belongs to the peptidase M17 family. Mn(2+) is required as a cofactor.

The protein localises to the cytoplasm. The enzyme catalyses Release of an N-terminal amino acid, Xaa-|-Yaa-, in which Xaa is preferably Leu, but may be other amino acids including Pro although not Arg or Lys, and Yaa may be Pro. Amino acid amides and methyl esters are also readily hydrolyzed, but rates on arylamides are exceedingly low.. It carries out the reaction Release of an N-terminal amino acid, preferentially leucine, but not glutamic or aspartic acids.. Presumably involved in the processing and regular turnover of intracellular proteins. Catalyzes the removal of unsubstituted N-terminal amino acids from various peptides. In Actinobacillus pleuropneumoniae serotype 3 (strain JL03), this protein is Probable cytosol aminopeptidase.